The sequence spans 537 residues: LLLCVGLLLVLKHHDGAAHKLVCYFTNWAFSRPGPASILPRDLDPFLCTHLVFAFASMSNNQIVPKDPQDEKILYPEFNKLKERNRGLKTLLSIGGWNFGTVRFTTMLSTFSNRERFVSSVIALLRTHGFDGLDLFFLYPGLRGSPARDRWTFVFLLEELLQAFKNEAQLTMRPRLLLSAAVSGDPHVVQKAYEARLLGRLLDFISVLSYDLHGSWEKVTGHNSPLFSLPGDPKSSAYAMNYWRQLGVPPEKLLMGLPTYGRTFHLLKASQNELRAQAVGPASPGKYTKQAGFLAYYEICCFVRRAKKRWINDQYVPYAFKGKEWVGYDDAISFGYKAFFIKREHFGGAMVWTLDLDDFRGYFCGTGPFPLVHTLNNLLVNDEFSSTPSPKFWFSTAVNSSRIGPEMPTMTRDLTTGLGILPPGGEAVATETHRKSETMTITPKGEIATPTRTPLSFGRHTAAPEGKTESPGEKPLTTVGHLAVSPGGIAVGPVRLQTGQKVTPPGRKAGVPEKVTTPSGKMTVTPDGRAETLERRL.

The N-terminal stretch at 1–18 (LLLCVGLLLVLKHHDGAA) is a signal peptide. The region spanning 19-382 (HKLVCYFTNW…HTLNNLLVND (364 aa)) is the GH18 domain. A disulfide bond links C23 and C48. Chitin-binding positions include 68 to 69 (PQ), 95 to 98 (GGWN), Y139, 208 to 211 (LSYD), and W352. Residue N399 is glycosylated (N-linked (GlcNAc...) asparagine). Disordered regions lie at residues 446–475 (EIAT…GEKP) and 498–537 (TGQK…ERRL). Over residues 528–537 (GRAETLERRL) the composition is skewed to basic and acidic residues.

The protein belongs to the glycosyl hydrolase 18 family. In terms of tissue distribution, oviduct.

The protein resides in the cytoplasmic vesicle. It localises to the secretory vesicle. In terms of biological role, binds to oocyte zona pellucida in vivo. May play a role in the fertilization process and/or early embryonic development. This is Oviduct-specific glycoprotein (OVGP1) from Bos taurus (Bovine).